The sequence spans 89 residues: Small ribosomal subunit protein uS15 (89 aa).

Belongs to the universal ribosomal protein uS15 family. In terms of assembly, part of the 30S ribosomal subunit. Forms a bridge to the 50S subunit in the 70S ribosome, contacting the 23S rRNA.

In terms of biological role, one of the primary rRNA binding proteins, it binds directly to 16S rRNA where it helps nucleate assembly of the platform of the 30S subunit by binding and bridging several RNA helices of the 16S rRNA. Functionally, forms an intersubunit bridge (bridge B4) with the 23S rRNA of the 50S subunit in the ribosome. The polypeptide is Small ribosomal subunit protein uS15 (Prochlorococcus marinus (strain MIT 9515)).